The primary structure comprises 355 residues: Green-sensitive opsin-1 (355 aa).

Residues 1 to 49 are Extracellular-facing; that stretch reads MAAHADEPVFAARRYNEETTRESAFVYTNANNTRDPFEGPNYHIAPRWV. N-linked (GlcNAc...) asparagine glycosylation occurs at Asn31. A helical membrane pass occupies residues 50 to 74; the sequence is YNLASLWMIIVVIASIFTNSLVIVA. At 75–86 the chain is on the cytoplasmic side; it reads TAKFKKLRHPLN. A helical transmembrane segment spans residues 87 to 112; the sequence is WILVNLAIADLGETVLASTISVFNQV. Residues 113 to 126 are Extracellular-facing; the sequence is FGYFVLGHPMCIFE. Cys123 and Cys200 are disulfide-bonded. A helical transmembrane segment spans residues 127–146; sequence GWTVSVCGITALWSLTIISW. Residues 147-165 lie on the Cytoplasmic side of the membrane; sequence ERWVVVCKPFGNVKFDGKW. The helical transmembrane segment at 166–189 threads the bilayer; that stretch reads AAGGIIFAWTWAIIWCTPPIFGWS. The Extracellular portion of the chain corresponds to 190–215; that stretch reads RYWPHGLKTSCGPDVFSGSEDPGVAS. Residues 216 to 243 form a helical membrane-spanning segment; the sequence is YMVTLLLTCCILPLSVIIICYIFVWNAI. Topologically, residues 244 to 265 are cytoplasmic; sequence HQVAQQQKDSESTQKAEKEVSR. Residues 266-289 form a helical membrane-spanning segment; that stretch reads MVVVMILAFILCWGPYASFATFSA. The Extracellular portion of the chain corresponds to 290–297; that stretch reads LNPGYAWH. The helical transmembrane segment at 298–322 threads the bilayer; the sequence is PLAAALPAYFAKSATIYNPIIYVFM. At Lys309 the chain carries N6-(retinylidene)lysine. Over 323–355 the chain is Cytoplasmic; the sequence is NRQFRSCIMQLFGKKVEDASEVSGSTTEVSTAS.

This sequence belongs to the G-protein coupled receptor 1 family. Opsin subfamily. The color pigments are found in the cone photoreceptor cells.

It localises to the membrane. Its function is as follows. Visual pigments are the light-absorbing molecules that mediate vision. They consist of an apoprotein, opsin, covalently linked to cis-retinal. This Psalidodon fasciatus (Banded astyanax) protein is Green-sensitive opsin-1 (G103).